Reading from the N-terminus, the 157-residue chain is Succinate dehydrogenase assembly factor 2-B, mitochondrial (157 aa).

Residues 1 to 22 (MLSQWFRGRHLVVRSALFSRRR) constitute a mitochondrion transit peptide.

This sequence belongs to the SDHAF2 family. Interacts with the flavoprotein subunit within the SDH catalytic dimer.

The protein resides in the mitochondrion matrix. In terms of biological role, plays an essential role in the assembly of succinate dehydrogenase (SDH), an enzyme complex (also referred to as respiratory complex II) that is a component of both the tricarboxylic acid (TCA) cycle and the mitochondrial electron transport chain, and which couples the oxidation of succinate to fumarate with the reduction of ubiquinone (coenzyme Q) to ubiquinol. Required for flavinylation (covalent attachment of FAD) of the flavoprotein subunit of the SDH catalytic dimer. The protein is Succinate dehydrogenase assembly factor 2-B, mitochondrial of Drosophila mojavensis (Fruit fly).